Consider the following 419-residue polypeptide: Squamosa promoter-binding-like protein 2 (419 aa).

Positions 77 to 96 are disordered; sequence SAEVRTHNFTSETGESLPGE. An SBP-type zinc finger spans residues 166–243; it reads TPHCQVEGCN…SDHNARRRKP (78 aa). Residues cysteine 169, cysteine 174, cysteine 191, histidine 194, cysteine 210, cysteine 213, histidine 217, and cysteine 229 each coordinate Zn(2+). Residues 226–242 carry the Bipartite nuclear localization signal motif; sequence KRSCRRRLSDHNARRRK. A disordered region spans residues 230–249; it reads RRRLSDHNARRRKPNPGRTY.

It depends on Zn(2+) as a cofactor.

It localises to the nucleus. In terms of biological role, trans-acting factor that binds specifically to the consensus nucleotide sequence 5'-TNCGTACAA-3'. The polypeptide is Squamosa promoter-binding-like protein 2 (SPL2) (Arabidopsis thaliana (Mouse-ear cress)).